We begin with the raw amino-acid sequence, 293 residues long: MEAVLTEELDEEEQLLRRHRKEKKELQAKIQGMKNAVPKNDKKRRKQLTEDVAKLEKEMEQKHREELEQLKLTTKENKIDSVAVNISNLVLENQPPRISKAQKRREKKAALEKEREERIAEAEIENLTGARHMESEKLAQILAARQLEIKQIPSDGHCMYKAIEDQLKEKDCALTVVALRSQTAEYMQSHVEDFLPFLTNPNTGDMYTPEEFQKYCEDIVNTAAWGGQLELRALSHILQTPIEIIQADSPPIIVGEEYSKKPLILVYMRHAYGLGEHYNSVTRLVNIVTENCS.

Residue methionine 1 is modified to N-acetylmethionine. In terms of domain architecture, OTU spans 147-284 (LEIKQIPSDG…GEHYNSVTRL (138 aa)). A cys-loop region spans residues 152 to 158 (IPSDGHC). Aspartate 155 is an active-site residue. Cysteine 158 serves as the catalytic Nucleophile. The tract at residues 219–229 (IVNTAAWGGQL) is variable-loop. Positions 267–277 (YMRHAYGLGEH) are his-loop. Histidine 277 is a catalytic residue.

Interacts with the eukaryotic translation initiation factor 4F complex.

The catalysed reaction is Thiol-dependent hydrolysis of ester, thioester, amide, peptide and isopeptide bonds formed by the C-terminal Gly of ubiquitin (a 76-residue protein attached to proteins as an intracellular targeting signal).. Deubiquitinating enzyme that may play a role in the ubiquitin-dependent regulation of protein synthesis, downstream of mTORC1. May associate with the protein synthesis initiation complex and modify its ubiquitination to repress translation. May also repress DNA synthesis and modify different cellular targets thereby regulating cell growth and proliferation. May also play a role in proteasome assembly and function. In terms of biological role, stimulates protein synthesis. Influences the expression of CCND1/cyclin D1 by promoting its translation and regulates MYC/c-Myc protein stability. In Homo sapiens (Human), this protein is Deubiquitinase OTUD6B.